Consider the following 841-residue polypeptide: DNA mismatch repair protein MutS (841 aa).

Residue 596–603 coordinates ATP; sequence GPNMSGKS.

This sequence belongs to the DNA mismatch repair MutS family.

This protein is involved in the repair of mismatches in DNA. It is possible that it carries out the mismatch recognition step. This protein has a weak ATPase activity. This is DNA mismatch repair protein MutS from Acholeplasma laidlawii (strain PG-8A).